The chain runs to 100 residues: Large ribosomal subunit protein uL23 (100 aa).

The protein belongs to the universal ribosomal protein uL23 family. Part of the 50S ribosomal subunit. Contacts protein L29, and trigger factor when it is bound to the ribosome.

Its function is as follows. One of the early assembly proteins it binds 23S rRNA. One of the proteins that surrounds the polypeptide exit tunnel on the outside of the ribosome. Forms the main docking site for trigger factor binding to the ribosome. The chain is Large ribosomal subunit protein uL23 from Proteus mirabilis (strain HI4320).